The following is a 176-amino-acid chain: Nucleoside triphosphate/diphosphate phosphatase (176 aa).

The active-site Proton donor is the Arg-23. Asn-87, Asp-103, Asp-105, Asp-107, Asp-120, and Glu-123 together coordinate Mg(2+).

This sequence belongs to the Ntdp family. Mg(2+) is required as a cofactor.

The enzyme catalyses a ribonucleoside 5'-triphosphate + H2O = a ribonucleoside 5'-diphosphate + phosphate + H(+). It carries out the reaction a ribonucleoside 5'-diphosphate + H2O = a ribonucleoside 5'-phosphate + phosphate + H(+). Its function is as follows. Has nucleoside phosphatase activity towards nucleoside triphosphates and nucleoside diphosphates. This is Nucleoside triphosphate/diphosphate phosphatase from Bacillus cereus (strain AH820).